The primary structure comprises 154 residues: Regulatory protein RecX (154 aa).

The protein belongs to the RecX family.

The protein localises to the cytoplasm. Its function is as follows. Modulates RecA activity. This chain is Regulatory protein RecX, found in Trichlorobacter lovleyi (strain ATCC BAA-1151 / DSM 17278 / SZ) (Geobacter lovleyi).